Here is a 224-residue protein sequence, read N- to C-terminus: CRP-like cAMP-activated global transcriptional regulator (224 aa).

Residues 64–70, 79–82, 89–90, 134–135, 142–143, and 178–188 each bind 3',5'-cyclic AMP; these read GRENLLT, GELS, RT, TN, IF, and EEIAQLVGASR. Positions 144 to 217 constitute an HTH crp-type domain; the sequence is TDVPGRVAKQ…GKSVLISDSE (74 aa). The segment at residues 177 to 196 is a DNA-binding region (H-T-H motif); the sequence is QEEIAQLVGASRETVNKALA.

Homodimer.

Its function is as follows. Global transcriptional regulator that complexes with cAMP and binds to specific DNA promoter sites, causing DNA-bending, to regulate transcription. cAMP improves binding to specific DNA sequences, probably by altering protein conformation. Activates expression of whiB1. The chain is CRP-like cAMP-activated global transcriptional regulator from Mycobacterium tuberculosis (strain CDC 1551 / Oshkosh).